A 455-amino-acid polypeptide reads, in one-letter code: Ribulose bisphosphate carboxylase large chain (455 aa).

K5 carries the N6,N6,N6-trimethyllysine modification. The substrate site is built by N114 and T164. K166 functions as the Proton acceptor in the catalytic mechanism. K168 contacts substrate. The Mg(2+) site is built by K192, D194, and E195. N6-carboxylysine is present on K192. Catalysis depends on H285, which acts as the Proton acceptor. R286, H318, and S370 together coordinate substrate.

It belongs to the RuBisCO large chain family. Type I subfamily. Heterohexadecamer of 8 large chains and 8 small chains; disulfide-linked. The disulfide link is formed within the large subunit homodimers. Mg(2+) serves as cofactor. The disulfide bond which can form in the large chain dimeric partners within the hexadecamer appears to be associated with oxidative stress and protein turnover.

The protein localises to the plastid. The protein resides in the chloroplast. The enzyme catalyses 2 (2R)-3-phosphoglycerate + 2 H(+) = D-ribulose 1,5-bisphosphate + CO2 + H2O. The catalysed reaction is D-ribulose 1,5-bisphosphate + O2 = 2-phosphoglycolate + (2R)-3-phosphoglycerate + 2 H(+). In terms of biological role, ruBisCO catalyzes two reactions: the carboxylation of D-ribulose 1,5-bisphosphate, the primary event in carbon dioxide fixation, as well as the oxidative fragmentation of the pentose substrate in the photorespiration process. Both reactions occur simultaneously and in competition at the same active site. This Lupinus arcticus (Arctic lupine) protein is Ribulose bisphosphate carboxylase large chain.